Reading from the N-terminus, the 153-residue chain is MAPDVAWLLVLPLVFRPTLVTGITIQTAIKNFRTLHVDYPMVNYPKGFHGYCNGLMAYVRGKLQDWYCPKIHYVVHAPLEDIQKFCKYSESFCENYNEYCTLTQNSFPVTICTLVHQQAPTSCSYNSTLTNQRLYLLCSRKHDAEPIGIIGLY.

The signal sequence occupies residues 1–22 (MAPDVAWLLVLPLVFRPTLVTG).

The protein belongs to the pancreatic ribonuclease family.

Its subcellular location is the secreted. In terms of biological role, does not exhibit any ribonuclease activity. The sequence is that of Probable inactive ribonuclease-like protein 13 (Rnase13) from Mus musculus (Mouse).